The following is a 74-amino-acid chain: Sec-independent protein translocase protein TatA (74 aa).

A helical transmembrane segment spans residues 1–21; sequence MGSMSWIHWVIVLGIVALLFG. A disordered region spans residues 51–74; the sequence is EVADNKAKSALPRTEAEAEELRKS. Positions 64–74 are enriched in basic and acidic residues; sequence TEAEAEELRKS.

It belongs to the TatA/E family. In terms of assembly, the Tat system comprises two distinct complexes: a TatABC complex, containing multiple copies of TatA, TatB and TatC subunits, and a separate TatA complex, containing only TatA subunits. Substrates initially bind to the TatABC complex, which probably triggers association of the separate TatA complex to form the active translocon.

The protein localises to the cell inner membrane. Its function is as follows. Part of the twin-arginine translocation (Tat) system that transports large folded proteins containing a characteristic twin-arginine motif in their signal peptide across membranes. TatA could form the protein-conducting channel of the Tat system. This chain is Sec-independent protein translocase protein TatA, found in Caulobacter vibrioides (strain ATCC 19089 / CIP 103742 / CB 15) (Caulobacter crescentus).